The chain runs to 330 residues: uncharacterized protein (330 aa).

The protein belongs to the ornithine cyclodeaminase/mu-crystallin family.

Its subcellular location is the cytoplasm. This is an uncharacterized protein from Schizosaccharomyces pombe (strain 972 / ATCC 24843) (Fission yeast).